The primary structure comprises 241 residues: MSQVKYKRIILKISGEALAGDKGNGINPTVIGHLAKEIKSVYDLCVGIGIVCGGGNMWRGETGAKLGMERAQADYMGMLATIMNGLALQDGLEKVGVPTRMQTSIEMRQIAEPYIRRRALRHLEKGRVVIFGGGTGNPYFSTDTTAALRAAEIGADVILMAKNGVDGVYSADPKTDPTATKFTELTQLDLISKNLKVMDRTASSLSMDTEIPLIVFNVNTPGNIKKVVVGENIGTVIRGDK.

12-15 (KISG) contacts ATP. Residues 20 to 25 (GDKGNG) are involved in allosteric activation by GTP. Glycine 54 contributes to the UMP binding site. The ATP site is built by glycine 55 and arginine 59. Residues aspartate 74 and 135–142 (TGNPYFST) contribute to the UMP site. ATP is bound by residues asparagine 163, tyrosine 169, and aspartate 172.

The protein belongs to the UMP kinase family. In terms of assembly, homohexamer.

The protein localises to the cytoplasm. The catalysed reaction is UMP + ATP = UDP + ADP. Its pathway is pyrimidine metabolism; CTP biosynthesis via de novo pathway; UDP from UMP (UMPK route): step 1/1. Its activity is regulated as follows. Allosterically activated by GTP. Inhibited by UTP. Its function is as follows. Catalyzes the reversible phosphorylation of UMP to UDP. In Lactobacillus helveticus (strain DPC 4571), this protein is Uridylate kinase.